A 532-amino-acid polypeptide reads, in one-letter code: Wee1-like protein kinase 2 (532 aa).

A disordered region spans residues 123–166; sequence INPFTPDTVRRNSEHYKRKSQRSDDDEDYGPRSKEIQNSSEDES. A Protein kinase domain is found at 188–465; it reads FLELACIGVG…RHDVLCKERA (278 aa). Residues 194–202 and K217 contribute to the ATP site; that span reads IGVGEFGSV. The active-site Proton acceptor is the D315. 2 residues coordinate Mg(2+): N320 and D354. A coiled-coil region spans residues 469–495; sequence ATQLRKELNVEKFRTAMLERELKEARL.

This sequence belongs to the protein kinase superfamily. Ser/Thr protein kinase family. WEE1 subfamily.

It localises to the nucleus. It catalyses the reaction L-tyrosyl-[protein] + ATP = O-phospho-L-tyrosyl-[protein] + ADP + H(+). Its function is as follows. Oocyte-specific protein tyrosine kinase that phosphorylates and inhibits cdk1 and acts as a key regulator of meiosis. Required to maintain meiotic arrest in oocytes by phosphorylating cdk1 at 'Tyr-15', leading to inhibit cdk1 activity and prevent meiotic reentry. The sequence is that of Wee1-like protein kinase 2 (wee2) from Danio rerio (Zebrafish).